We begin with the raw amino-acid sequence, 1427 residues long: A disintegrin and metalloproteinase with thrombospondin motifs 13 (1427 aa).

The first 29 residues, 1–29, serve as a signal peptide directing secretion; sequence MHQRHPRARCPPLCVAGILACGFLLGCWG. Residues 30 to 74 constitute a propeptide that is removed on maturation; the sequence is PSHFQQSCLQALEPQAVSSYLSPGAPLKGRPPSPGFQRQRQRQRR. The tract at residues 51 to 70 is disordered; the sequence is SPGAPLKGRPPSPGFQRQRQ. Positions 80-286 constitute a Peptidase M12B domain; it reads LHLELLVAVG…GRARCVWDPP (207 aa). Residue glutamate 83 coordinates Ca(2+). N-linked (GlcNAc...) asparagine glycans are attached at residues asparagine 142 and asparagine 146. Cystine bridges form between cysteine 155-cysteine 208, cysteine 202-cysteine 281, and cysteine 242-cysteine 265. Aspartate 173, aspartate 182, glutamate 184, aspartate 187, and glutamate 212 together coordinate Ca(2+). Histidine 224 is a Zn(2+) binding site. Residue glutamate 225 is part of the active site. Zn(2+)-binding residues include histidine 228 and histidine 234. Ca(2+) is bound by residues cysteine 281 and aspartate 284. The 97-residue stretch at 287 to 383 folds into the Disintegrin domain; sequence RPQPGSAGHP…LVELTPIAAV (97 aa). 4 disulfides stabilise this stretch: cysteine 311–cysteine 337, cysteine 322–cysteine 347, cysteine 332–cysteine 366, and cysteine 360–cysteine 371. Positions 384 to 439 constitute a TSP type-1 1 domain; it reads HGRWSSWGPRSPCSRSCGGGVVTRRRQCNNPRPAFGGRACVGADLQAEMCNTQACE. A C-linked (Man) tryptophan glycan is attached at tryptophan 387. Disulfide bonds link cysteine 396–cysteine 433, cysteine 400–cysteine 438, cysteine 411–cysteine 423, cysteine 450–cysteine 487, cysteine 483–cysteine 522, cysteine 508–cysteine 527, cysteine 532–cysteine 548, and cysteine 545–cysteine 555. O-linked (Fuc...) serine glycosylation occurs at serine 399. The cysteine-rich stretch occupies residues 440–556; the sequence is KTQLEFMSQQ…VCGGDNSTCS (117 aa). The Cell attachment site motif lies at 498–500; sequence RGD. Residues asparagine 552, asparagine 579, and asparagine 614 are each glycosylated (N-linked (GlcNAc...) asparagine). The interval 556–685 is spacer; that stretch reads SPRKGSFTAG…TYFQPKPRQA (130 aa). Asparagine 667 carries an N-linked (GlcNAc...) (complex) asparagine glycan. 7 TSP type-1 domains span residues 682-730, 742-805, 808-859, 896-950, 951-1011, 1012-1068, and 1072-1131; these read PRQA…SQQP, CPPY…QPCP, WEVS…PEPC, VWTP…QAVP, CPAR…SLEP, CPPR…VPCL, and CTYR…GPCV. An O-linked (Fuc...) serine glycan is attached at serine 698. Residue asparagine 707 is glycosylated (N-linked (GlcNAc...) (complex) asparagine). A glycan (O-linked (Fuc...) serine) is linked at serine 757. N-linked (GlcNAc...) asparagine glycosylation occurs at asparagine 828. O-linked (Fuc...) serine glycans are attached at residues serine 907, serine 965, serine 1027, and serine 1087. CUB domains are found at residues 1192–1298 and 1299–1427; these read CGRQ…FYRE and CDMQ…KEGT. Residues asparagine 1235 and asparagine 1354 are each glycosylated (N-linked (GlcNAc...) asparagine).

Requires Zn(2+) as cofactor. It depends on Ca(2+) as a cofactor. In terms of processing, glycosylated. O-fucosylated by POFUT2 on a serine or a threonine residue found within the consensus sequence C1-X(2)-(S/T)-C2-G of the TSP type-1 repeat domains where C1 and C2 are the first and second cysteine residue of the repeat, respectively. Fucosylated repeats can then be further glycosylated by the addition of a beta-1,3-glucose residue by the glucosyltransferase, B3GALTL. Fucosylation mediates the efficient secretion of ADAMTS13. May also be C-glycosylated on tryptophan residues within the consensus sequence W-X-X-W of the TPRs, and also N-glycosylated. These other glycosylations can also facilitate secretion. The precursor is processed by a furin endopeptidase which cleaves off the pro-domain. Plasma. Expressed primarily in liver.

Its subcellular location is the secreted. It catalyses the reaction The enzyme cleaves the von Willebrand factor at bond 842-Tyr-|-Met-843 within the A2 domain.. Its activity is regulated as follows. Zinc and calcium ions cooperatively modulate enzyme activity. The cleavage of the pro-domain is not required for protease activity. Dependence on calcium for proteolytic activity is mediated by the high affinity site. Cleaves the vWF multimers in plasma into smaller forms thereby controlling vWF-mediated platelet thrombus formation. In Homo sapiens (Human), this protein is A disintegrin and metalloproteinase with thrombospondin motifs 13 (ADAMTS13).